The primary structure comprises 242 residues: MSEPANERTGFHRVLLKLGGEMFGGGKVGLDPDVVTKVAEQIAEVVRSGVQVAVVIGGGNFFRGAELQQRGLDRARSDYMGMLGTVMNCLALQDFLEKEGIDSRVQTAITMGQVAEPYIPLRAQRHLEKGRVVIFGAGMGMPYFSTDTTAAQRALEIGAEVVLMAKAVDGVFTADPNLDPTATMYAQITHREVIEQGLKVADATAFSLCMDNEMPIMVFNLLTEGNIARAVSGEKIGTLVKS.

K17–G20 contacts ATP. Residue G58 participates in UMP binding. The ATP site is built by G59 and R63. Residues D78 and M139–T146 contribute to the UMP site. ATP contacts are provided by F172 and D175.

Belongs to the UMP kinase family. As to quaternary structure, homohexamer.

The protein resides in the cytoplasm. The catalysed reaction is UMP + ATP = UDP + ADP. The protein operates within pyrimidine metabolism; CTP biosynthesis via de novo pathway; UDP from UMP (UMPK route): step 1/1. Inhibited by UTP. Catalyzes the reversible phosphorylation of UMP to UDP. This is Uridylate kinase from Rhodococcus jostii (strain RHA1).